Reading from the N-terminus, the 525-residue chain is G patch domain-containing protein 3 (525 aa).

Residues 264 to 316 are disordered; it reads YLADIPASPCGEPEEEVGKEEEEESHSDEDDDRGEEWERHEALHEDVTGQERT. Positions 275-298 are enriched in acidic residues; the sequence is EPEEEVGKEEEEESHSDEDDDRGE. The segment covering 299–316 has biased composition (basic and acidic residues); it reads EWERHEALHEDVTGQERT. The region spanning 410–458 is the G-patch domain; sequence TKGIGRKVMERQGWAEGQGLGCRCSGVPEALDSDGQHPRCKRGLGYHGE.

In terms of assembly, interacts with mitochondrial MAVS; the interaction is markedly increased upon viral infection. In terms of tissue distribution, expressed in ocular tissues including retinal pigment epithelium, cornea, ciliary muscle and non-pigmented ciliary epithelium. Also expressed in optic nerve, cartilage, skin and lymph node.

The protein resides in the nucleus. It is found in the cytoplasm. In terms of biological role, involved in transcriptional regulation. It is able to activate transcription from the CXCR4 promoter and therefore it might control neural crest cell migration involved in ocular and craniofacial development. Is a negative regulator of immune antiviral response, acting via down-regulation of RIG-I-like receptors signaling and inhibition of type I interferon production. The control mechanism involves interaction with mitochondrial MAVS and inhibition of MAVS assembly with downstream proteins implicated in antiviral response, such as TBK1 and TRAF6. This chain is G patch domain-containing protein 3 (GPATCH3), found in Homo sapiens (Human).